Consider the following 543-residue polypeptide: CTP synthase (543 aa).

The interval 1–265 (MARYIFITGG…DGEVLRHFGL (265 aa)) is amidoligase domain. A CTP-binding site is contributed by serine 13. Serine 13 lines the UTP pocket. ATP is bound at residue 14-19 (SLGKGL). Tyrosine 54 contributes to the L-glutamine binding site. Aspartate 71 provides a ligand contact to ATP. Mg(2+) is bound by residues aspartate 71 and glutamate 139. Residues 146–148 (DIE), 186–191 (KTKPTQ), and lysine 222 contribute to the CTP site. UTP is bound by residues 186-191 (KTKPTQ) and lysine 222. Residues 290-542 (TIGVVGKYVG…IAAAVKQARL (253 aa)) enclose the Glutamine amidotransferase type-1 domain. Glycine 354 lines the L-glutamine pocket. Catalysis depends on cysteine 381, which acts as the Nucleophile; for glutamine hydrolysis. Residues 382-385 (LGMQ), glutamate 405, and arginine 470 contribute to the L-glutamine site. Active-site residues include histidine 515 and glutamate 517.

This sequence belongs to the CTP synthase family. In terms of assembly, homotetramer.

It catalyses the reaction UTP + L-glutamine + ATP + H2O = CTP + L-glutamate + ADP + phosphate + 2 H(+). The catalysed reaction is L-glutamine + H2O = L-glutamate + NH4(+). The enzyme catalyses UTP + NH4(+) + ATP = CTP + ADP + phosphate + 2 H(+). It participates in pyrimidine metabolism; CTP biosynthesis via de novo pathway; CTP from UDP: step 2/2. With respect to regulation, allosterically activated by GTP, when glutamine is the substrate; GTP has no effect on the reaction when ammonia is the substrate. The allosteric effector GTP functions by stabilizing the protein conformation that binds the tetrahedral intermediate(s) formed during glutamine hydrolysis. Inhibited by the product CTP, via allosteric rather than competitive inhibition. Catalyzes the ATP-dependent amination of UTP to CTP with either L-glutamine or ammonia as the source of nitrogen. Regulates intracellular CTP levels through interactions with the four ribonucleotide triphosphates. This Novosphingobium aromaticivorans (strain ATCC 700278 / DSM 12444 / CCUG 56034 / CIP 105152 / NBRC 16084 / F199) protein is CTP synthase.